The chain runs to 234 residues: BTB/POZ domain-containing protein KCTD5 (234 aa).

Alanine 2 is subject to N-acetylalanine. In terms of domain architecture, BTB spans 44 to 146 (KWVRLNVGGT…LVKDKIRERD (103 aa)). The interval 211 to 234 (NSPHGPASEPSEKAKILQERGSRM) is disordered. A compositionally biased stretch (basic and acidic residues) spans 220 to 234 (PSEKAKILQERGSRM).

In terms of assembly, homopentamer. Interacts (via C-terminus) with GRASP55/GORASP2. Interacts with CUL3 and with ubiquitinated proteins. Interacts with CRY1.

Its subcellular location is the cytoplasm. The protein resides in the cytosol. It is found in the nucleus. Its interaction with CUL3 suggests that it may act as a substrate adapter in some E3 ligase complex. Does not affect the function of Kv channel Kv2.1/KCNB1, Kv1.2/KCNA2, Kv4.2/KCND2 and Kv3.4/KCNC4. In Bos taurus (Bovine), this protein is BTB/POZ domain-containing protein KCTD5 (KCTD5).